We begin with the raw amino-acid sequence, 484 residues long: 1,3-beta-glucanosyltransferase GAS5 (484 aa).

The N-terminal stretch at 1-19 is a signal peptide; it reads MLLRSLTSAFVLSAGLAQA. N-linked (GlcNAc...) asparagine glycosylation is found at Asn24 and Asn60. Cysteines 71 and 100 form a disulfide. Residues Tyr89, Asn159, and Glu160 each contribute to the (1,3-beta-D-glucosyl)n site. The active-site Proton donor is Glu160. Residue Asn166 is glycosylated (N-linked (GlcNAc...) asparagine). (1,3-beta-D-glucosyl)n is bound by residues Asp201 and Arg206. 2 cysteine pairs are disulfide-bonded: Cys215-Cys348 and Cys234-Cys265. Glu262 (nucleophile) is an active-site residue. A (1,3-beta-D-glucosyl)n-binding site is contributed by Tyr295. Asn299, Asn344, and Asn359 each carry an N-linked (GlcNAc...) asparagine glycan. Positions 383–462 are disordered; the sequence is TGIATQQSCD…SSQSSSKSKG (80 aa). Residues 394–404 are compositionally biased toward acidic residues; sequence KDDDDEEDDDT. Low complexity predominate over residues 405–462; the sequence is SSSSSSSSSSSSSASSSSESSSSTSKASSSSPSASETSLLKSAASATSSSQSSSKSKG. The GPI-anchor amidated glycine moiety is linked to residue Gly462. A propeptide spans 463 to 484 (removed in mature form); the sequence is AAGIIEIPLIFRALAELYNLVL.

Belongs to the glycosyl hydrolase 72 family. Post-translationally, the GPI-anchor is attached to the protein in the endoplasmic reticulum and serves to target the protein to the cell surface. There, the glucosamine-inositol phospholipid moiety is cleaved off and the GPI-modified mannoprotein is covalently attached via its lipidless GPI glycan remnant to the 1,6-beta-glucan of the outer cell wall layer.

The protein localises to the secreted. The protein resides in the cell wall. It is found in the membrane. In terms of biological role, splits internally a 1,3-beta-glucan molecule and transfers the newly generated reducing end (the donor) to the non-reducing end of another 1,3-beta-glucan molecule (the acceptor) forming a 1,3-beta linkage, resulting in the elongation of 1,3-beta-glucan chains in the cell wall. Involved in cell wall biosynthesis and morphogenesis. The sequence is that of 1,3-beta-glucanosyltransferase GAS5 (GAS5) from Saccharomyces cerevisiae (strain ATCC 204508 / S288c) (Baker's yeast).